Here is a 110-residue protein sequence, read N- to C-terminus: MALWTRLLPLLALLALLGPDPAQAFVNQHLCGSHLVEALYLVCGERGFFYTPKSRREVEEQQGGQVELGGGPGAGLPQPLALEMALQKRGIVEQCCTSICSLYQLENYCN.

Positions 1 to 24 are cleaved as a signal peptide; it reads MALWTRLLPLLALLALLGPDPAQA. 3 disulfide bridges follow: cysteine 31–cysteine 96, cysteine 43–cysteine 109, and cysteine 95–cysteine 100. The propeptide at 57–87 is c peptide; sequence EVEEQQGGQVELGGGPGAGLPQPLALEMALQ.

It belongs to the insulin family. As to quaternary structure, heterodimer of a B chain and an A chain linked by two disulfide bonds.

The protein resides in the secreted. Insulin decreases blood glucose concentration. It increases cell permeability to monosaccharides, amino acids and fatty acids. It accelerates glycolysis, the pentose phosphate cycle, and glycogen synthesis in liver. This Ictidomys tridecemlineatus (Thirteen-lined ground squirrel) protein is Insulin (INS).